We begin with the raw amino-acid sequence, 689 residues long: Glycine--tRNA ligase beta subunit (689 aa).

Belongs to the class-II aminoacyl-tRNA synthetase family. As to quaternary structure, tetramer of two alpha and two beta subunits.

It is found in the cytoplasm. It catalyses the reaction tRNA(Gly) + glycine + ATP = glycyl-tRNA(Gly) + AMP + diphosphate. The sequence is that of Glycine--tRNA ligase beta subunit from Serratia proteamaculans (strain 568).